A 368-amino-acid chain; its full sequence is Cobalt-precorrin-5B C(1)-methyltransferase (368 aa).

This sequence belongs to the CbiD family.

The enzyme catalyses Co-precorrin-5B + S-adenosyl-L-methionine = Co-precorrin-6A + S-adenosyl-L-homocysteine. It functions in the pathway cofactor biosynthesis; adenosylcobalamin biosynthesis; cob(II)yrinate a,c-diamide from sirohydrochlorin (anaerobic route): step 6/10. Catalyzes the methylation of C-1 in cobalt-precorrin-5B to form cobalt-precorrin-6A. The protein is Cobalt-precorrin-5B C(1)-methyltransferase of Brucella ovis (strain ATCC 25840 / 63/290 / NCTC 10512).